Reading from the N-terminus, the 340-residue chain is NADPH dehydrogenase (340 aa).

Residue 23–26 participates in FMN binding; the sequence is SPMC. Y28 serves as a coordination point for substrate. The FMN site is built by A60 and Q102. A substrate-binding site is contributed by 164–167; the sequence is HGAH. Residues R215 and 307 to 308 each bind FMN; that span reads AR.

The protein belongs to the NADH:flavin oxidoreductase/NADH oxidase family. NamA subfamily. In terms of assembly, homotetramer. It depends on FMN as a cofactor.

It catalyses the reaction A + NADPH + H(+) = AH2 + NADP(+). Its function is as follows. Catalyzes the reduction of the double bond of an array of alpha,beta-unsaturated aldehydes and ketones. It also reduces the nitro group of nitroester and nitroaromatic compounds. It could have a role in detoxification processes. The polypeptide is NADPH dehydrogenase (Geobacillus sp. (strain WCH70)).